We begin with the raw amino-acid sequence, 86 residues long: Exodeoxyribonuclease 7 small subunit (86 aa).

Belongs to the XseB family. Heterooligomer composed of large and small subunits.

The protein localises to the cytoplasm. The catalysed reaction is Exonucleolytic cleavage in either 5'- to 3'- or 3'- to 5'-direction to yield nucleoside 5'-phosphates.. Its function is as follows. Bidirectionally degrades single-stranded DNA into large acid-insoluble oligonucleotides, which are then degraded further into small acid-soluble oligonucleotides. This chain is Exodeoxyribonuclease 7 small subunit, found in Bacillus licheniformis (strain ATCC 14580 / DSM 13 / JCM 2505 / CCUG 7422 / NBRC 12200 / NCIMB 9375 / NCTC 10341 / NRRL NRS-1264 / Gibson 46).